Here is a 1342-residue protein sequence, read N- to C-terminus: DNA-directed RNA polymerase subunit beta (1342 aa).

Belongs to the RNA polymerase beta chain family. The RNAP catalytic core consists of 2 alpha, 1 beta, 1 beta' and 1 omega subunit. When a sigma factor is associated with the core the holoenzyme is formed, which can initiate transcription.

The enzyme catalyses RNA(n) + a ribonucleoside 5'-triphosphate = RNA(n+1) + diphosphate. Its function is as follows. DNA-dependent RNA polymerase catalyzes the transcription of DNA into RNA using the four ribonucleoside triphosphates as substrates. The polypeptide is DNA-directed RNA polymerase subunit beta (Buchnera aphidicola subsp. Acyrthosiphon pisum (strain Tuc7)).